Consider the following 690-residue polypeptide: Quinohemoprotein alcohol dehydrogenase ADH IIB (690 aa).

Residues 1-22 (MKKPLRTSLLMLCLATPLAALA) form the signal peptide. Glu-81 is a binding site for pyrroloquinoline quinone. The cysteines at positions 127 and 128 are disulfide-linked. Pyrroloquinoline quinone contacts are provided by residues Arg-133, Thr-177, and 193-194 (GA). Glu-195 contributes to the Ca(2+) binding site. Residue Thr-252 coordinates pyrroloquinoline quinone. 2 residues coordinate Ca(2+): Asn-272 and Asp-317. Asp-317 acts as the Proton acceptor in catalysis. Residues Lys-344, 404 to 405 (NW), and Val-547 each bind pyrroloquinoline quinone. A Cytochrome c domain is found at 600–678 (EQVQAGKQLY…QIKLYVMSRE (79 aa)). Heme c is bound by residues Cys-613, Cys-616, His-617, and Met-655.

The protein belongs to the bacterial PQQ dehydrogenase family. In terms of assembly, monomer. Pyrroloquinoline quinone serves as cofactor. The cofactor is Ca(2+). Requires heme c as cofactor.

Its subcellular location is the periplasm. It carries out the reaction 2 oxidized [azurin] + a primary alcohol = 2 reduced [azurin] + an aldehyde + 2 H(+). With respect to regulation, inhibited by 10 mM 1-butanol. Functionally, catalyzes the dye-linked oxidation of primary alcohols to the corresponding aldehydes and the (subsequent) oxidation of the aldehydes to carboxylic acids. Exhibits activity with longer mono-alcohols (C-4 to C-7) but not with methanol or glycerol. Reacts with 1,2-propanediol and 1,3-propanediol but not with sugar alcohols such as D-sorbitol. This chain is Quinohemoprotein alcohol dehydrogenase ADH IIB, found in Pseudomonas putida (Arthrobacter siderocapsulatus).